A 316-amino-acid chain; its full sequence is D-alanine--D-alanine ligase (316 aa).

The 200-residue stretch at 104 to 303 (KRVWLQHGLP…YADLCVAILA (200 aa)) folds into the ATP-grasp domain. 130–185 (PDRLGLPLILKPPHEGSTVGITKVAGYSDMKAAYELAARFDAEVLAEQFITGRELT) contacts ATP. D257, E270, and N272 together coordinate Mg(2+).

It belongs to the D-alanine--D-alanine ligase family. Mg(2+) is required as a cofactor. It depends on Mn(2+) as a cofactor.

Its subcellular location is the cytoplasm. It carries out the reaction 2 D-alanine + ATP = D-alanyl-D-alanine + ADP + phosphate + H(+). Its pathway is cell wall biogenesis; peptidoglycan biosynthesis. Cell wall formation. The sequence is that of D-alanine--D-alanine ligase from Bordetella bronchiseptica (strain ATCC BAA-588 / NCTC 13252 / RB50) (Alcaligenes bronchisepticus).